The following is a 179-amino-acid chain: Coiled-coil domain-containing protein 32 (179 aa).

Residues 36-65 are disordered; that stretch reads DNAFSDSFMDSHPAGESHTAAADSAVQPAG. The stretch at 75–98 forms a coiled coil; it reads EVYLASLEKKLRRIKGLNEEVTSK. The disordered stretch occupies residues 158–179; that stretch reads LIPPESQAEKPEAGDKPAAAEQ.

Interacts with AP2S1; the interaction is direct and mediates association with adaptor protein complex 2 (AP-2).

The protein localises to the membrane. Its subcellular location is the coated pit. Regulates clathrin-mediated endocytsois of cargos such as transferrin probably through the association and modulation of adaptor protein complex 2 (AP-2). Has a role in ciliogenesis. Required for proper cephalic and left/right axis development. This chain is Coiled-coil domain-containing protein 32 (Ccdc32), found in Mus musculus (Mouse).